The primary structure comprises 71 residues: Small ribosomal subunit protein bS21 (71 aa).

The interval 39 to 71 (EKPTQERKRKAAAAVKRQLRRSSRDVTKRQRLY) is disordered. A compositionally biased stretch (basic residues) spans 45 to 59 (RKRKAAAAVKRQLRR). Basic and acidic residues predominate over residues 60 to 71 (SSRDVTKRQRLY).

This sequence belongs to the bacterial ribosomal protein bS21 family.

The sequence is that of Small ribosomal subunit protein bS21 from Stenotrophomonas maltophilia (strain K279a).